A 467-amino-acid chain; its full sequence is MATGKIVQIIGAVVDVEFPQSEVPSVYDALNVTDSKERLVLEVQQQLGGGVVRCIVMGSSDGLRRGVEVVNTGAPISVPVGTKTLGRIMNVLGDAIDERGEIGAEEVYSIHREAPSYEEQSNETALLETGVKVIDLVCPFAKGGKIGLFGGAGVGKTVNMMELINNIALQHSGLSVFAGVGERTREGNDFYFEMQEAGVVNVENPEESKVAMVYGQMNEPPGNRLRVALTGLTMAERFRDEGRDVLLFVDNIYRYTLAGTEVSALLGRMPSAVGYQPTLAEEMGVLQERITSTKQGSITSVQAVYVPADDLTDPSPATTFAHLDATVVLNRNIAAMGLYPAIDPLDSTSRQLDPLVVGQDHYDIARGVQQTLQRYKELKDIIAILGMDELSESDKQVVSRARKIERFLTQPYHVAEVFTGDPGVYVPLKETLRGFKGLLAGEYDDIPEQAFMYCGTIDDAIENAKKL.

Residue 150–157 (GGAGVGKT) coordinates ATP.

The protein belongs to the ATPase alpha/beta chains family. In terms of assembly, F-type ATPases have 2 components, CF(1) - the catalytic core - and CF(0) - the membrane proton channel. CF(1) has five subunits: alpha(3), beta(3), gamma(1), delta(1), epsilon(1). CF(0) has three main subunits: a(1), b(2) and c(9-12). The alpha and beta chains form an alternating ring which encloses part of the gamma chain. CF(1) is attached to CF(0) by a central stalk formed by the gamma and epsilon chains, while a peripheral stalk is formed by the delta and b chains.

The protein resides in the cell inner membrane. It carries out the reaction ATP + H2O + 4 H(+)(in) = ADP + phosphate + 5 H(+)(out). In terms of biological role, produces ATP from ADP in the presence of a proton gradient across the membrane. The catalytic sites are hosted primarily by the beta subunits. In Vibrio parahaemolyticus serotype O3:K6 (strain RIMD 2210633), this protein is ATP synthase subunit beta.